The chain runs to 226 residues: Probable endolytic peptidoglycan transglycosylase RlpA (226 aa).

A signal peptide spans 1–26 (MERFLGFRTPLGALGVVILLTLILSS). Cysteine 27 is lipidated: N-palmitoyl cysteine. Cysteine 27 carries S-diacylglycerol cysteine lipidation.

This sequence belongs to the RlpA family.

Its subcellular location is the cell membrane. Its function is as follows. Lytic transglycosylase with a strong preference for naked glycan strands that lack stem peptides. This chain is Probable endolytic peptidoglycan transglycosylase RlpA, found in Aquifex aeolicus (strain VF5).